We begin with the raw amino-acid sequence, 40 residues long: U2-ctenitoxin-Pr1a (40 aa).

4 cysteine pairs are disulfide-bonded: Cys-2–Cys-17, Cys-9–Cys-22, Cys-16–Cys-32, and Cys-24–Cys-30.

In terms of tissue distribution, expressed by the venom gland.

The protein localises to the secreted. Functionally, neurotoxin. This Phoneutria reidyi (Brazilian Amazonian armed spider) protein is U2-ctenitoxin-Pr1a.